Reading from the N-terminus, the 422-residue chain is GTPase Obg (422 aa).

The 158-residue stretch at 4–161 (LHFVDEAFNE…FKIKTELKVL (158 aa)) folds into the Obg domain. The 166-residue stretch at 162 to 327 (ADIGLLGFPS…LKYEMSSLLQ (166 aa)) folds into the OBG-type G domain. GTP contacts are provided by residues 168 to 175 (GFPSVGKS), 193 to 197 (FTTIK), 214 to 217 (DLPG), 281 to 284 (NKMD), and 308 to 310 (SLV). Residues Ser-175 and Thr-195 each contribute to the Mg(2+) site. An OCT domain is found at 345–422 (TLPDNQNTIS…KICDRLFYFL (78 aa)).

This sequence belongs to the TRAFAC class OBG-HflX-like GTPase superfamily. OBG GTPase family. As to quaternary structure, monomer. It depends on Mg(2+) as a cofactor.

It is found in the cytoplasm. Functionally, an essential GTPase which binds GTP, GDP and possibly (p)ppGpp with moderate affinity, with high nucleotide exchange rates and a fairly low GTP hydrolysis rate. Plays a role in control of the cell cycle, stress response, ribosome biogenesis and in those bacteria that undergo differentiation, in morphogenesis control. In Onion yellows phytoplasma (strain OY-M), this protein is GTPase Obg.